The following is a 481-amino-acid chain: Acyl-CoA ligase cnsG (481 aa).

Positions 3 to 11 (SPQLPPSMK) match the PTS2-type peroxisomal targeting signal motif. Residues 124 to 132 (KSGTTGNPK), 263 to 268 (NGYGMT), Asp353, and Arg368 contribute to the ATP site. Thr268 provides a ligand contact to substrate. CoA contacts are provided by residues 376–378 (GGL) and 446–448 (AIF). ATP is bound at residue Lys466.

This sequence belongs to the ATP-dependent AMP-binding enzyme family.

It functions in the pathway alkaloid biosynthesis. Functionally, acyl-CoA ligase; part of the gene cluster that mediates the biosynthesis of communesins, a prominent class of indole alkaloids with great potential as pharmaceuticals. Communesins are biosynthesized by the coupling of tryptamine and aurantioclavine, two building blocks derived from L-tryptophan. The L-tryptophan decarboxylase cnsB converts L-tryptophan to tryptamine, whereas the tryptophan dimethylallyltransferase cnsF converts L-tryptophan to 4-dimethylallyl tryptophan which is further transformed to aurantioclavine by the aurantioclavine synthase cnsA, probably aided by the catalase cnsD. The cytochrome P450 monooxygenase cnsC catalyzes the heterodimeric coupling between the two different indole moieties, tryptamine and aurantioclavine, to construct vicinal quaternary stereocenters and yield the heptacyclic communesin scaffold. The O-methyltransferase cnsE then methylates the communesin scaffold to produce communesin K, the simplest characterized communesin that contains the heptacyclic core. The dioxygenase cnsJ converts communesin K into communesin I. Acylation to introduce the hexadienyl group at position N16 of communesin I by the acyltransferase cnsK leads to the production of communesin B. The hexadienyl group is produced by the highly reducing polyketide synthase cnsI, before being hydrolytically removed from cnsI by the serine hydrolase cnsH, converted into hexadienyl-CoA by the CoA ligase cnsG, and then transferred to communesin I by cnsK. Surprisingly, cnsK may also be a promiscuous acyltransferase that can tolerate a range of acyl groups, including acetyl-, propionyl-, and butyryl-CoA, which lead to communesins A, G and H respectively. The roles of the alpha-ketoglutarate-dependent dioxygenases cnsM and cnsP have still to be determined. The protein is Acyl-CoA ligase cnsG of Penicillium expansum (Blue mold rot fungus).